Reading from the N-terminus, the 49-residue chain is Large ribosomal subunit protein bL33B (49 aa).

Belongs to the bacterial ribosomal protein bL33 family.

This Bacillus licheniformis (strain ATCC 14580 / DSM 13 / JCM 2505 / CCUG 7422 / NBRC 12200 / NCIMB 9375 / NCTC 10341 / NRRL NRS-1264 / Gibson 46) protein is Large ribosomal subunit protein bL33B.